The following is a 519-amino-acid chain: U3 small nucleolar RNA-associated protein 15 homolog (519 aa).

A2 bears the N-acetylalanine mark. 7 WD repeats span residues 36 to 75 (KEFGAVSKVDFSPQPPYNYAVTASSRIHIYGRYSQEPIKT), 78 to 117 (RFKDTAYCATFRQDGRLLVAGSEDGGVQLFDISGRAPLRQ), 120 to 159 (GHTKAVHSVDFTADKYHVVSGADDYTVKLWDIPNSKEILT), 162 to 202 (EHSD…SVIS), 204 to 242 (EHGQPVESVLLFPSGGLLVSAGGRYVKVWDMLKGGQLLV), 246 to 285 (NHHKTVTCLCLSSSGQRLLSGSLDRKVKVYSTTSYKVVHS), and 287 to 326 (DYTASILSLALAHEDETIVVGMTNGILSVKHRKSEAKKDS). K249 is covalently cross-linked (Glycyl lysine isopeptide (Lys-Gly) (interchain with G-Cter in SUMO2)).

In terms of assembly, part of the small subunit (SSU) processome, composed of more than 70 proteins and the RNA chaperone small nucleolar RNA (snoRNA) U3. May be a component of the proposed t-UTP subcomplex of the ribosomal small subunit (SSU) processome containing at least UTP4, WDR43, HEATR1, UTP15, WDR75. Interacts directly with UTP4 and WDR43.

The protein resides in the nucleus. It localises to the nucleolus. In terms of biological role, ribosome biogenesis factor. Involved in nucleolar processing of pre-18S ribosomal RNA. Required for optimal pre-ribosomal RNA transcription by RNA polymerase I. Part of the small subunit (SSU) processome, first precursor of the small eukaryotic ribosomal subunit. During the assembly of the SSU processome in the nucleolus, many ribosome biogenesis factors, an RNA chaperone and ribosomal proteins associate with the nascent pre-rRNA and work in concert to generate RNA folding, modifications, rearrangements and cleavage as well as targeted degradation of pre-ribosomal RNA by the RNA exosome. The sequence is that of U3 small nucleolar RNA-associated protein 15 homolog from Bos taurus (Bovine).